Here is a 177-residue protein sequence, read N- to C-terminus: ATP synthase subunit delta (177 aa).

It belongs to the ATPase delta chain family. F-type ATPases have 2 components, F(1) - the catalytic core - and F(0) - the membrane proton channel. F(1) has five subunits: alpha(3), beta(3), gamma(1), delta(1), epsilon(1). F(0) has three main subunits: a(1), b(2) and c(10-14). The alpha and beta chains form an alternating ring which encloses part of the gamma chain. F(1) is attached to F(0) by a central stalk formed by the gamma and epsilon chains, while a peripheral stalk is formed by the delta and b chains.

It localises to the cell inner membrane. Functionally, f(1)F(0) ATP synthase produces ATP from ADP in the presence of a proton or sodium gradient. F-type ATPases consist of two structural domains, F(1) containing the extramembraneous catalytic core and F(0) containing the membrane proton channel, linked together by a central stalk and a peripheral stalk. During catalysis, ATP synthesis in the catalytic domain of F(1) is coupled via a rotary mechanism of the central stalk subunits to proton translocation. This protein is part of the stalk that links CF(0) to CF(1). It either transmits conformational changes from CF(0) to CF(1) or is implicated in proton conduction. This Aeromonas salmonicida (strain A449) protein is ATP synthase subunit delta.